The primary structure comprises 215 residues: Chaperone protein TorD (215 aa).

This sequence belongs to the TorD/DmsD family. TorD subfamily.

The protein localises to the cytoplasm. In terms of biological role, involved in the biogenesis of TorA. Acts on TorA before the insertion of the molybdenum cofactor and, as a result, probably favors a conformation of the apoenzyme that is competent for acquiring the cofactor. This is Chaperone protein TorD from Vibrio vulnificus (strain YJ016).